Here is a 190-residue protein sequence, read N- to C-terminus: MPQLPVLETAELPSDAVEVGRITDAWGVKGWFKVLPYSSNPEALLAAKSWLLQPAEKGAKSFFAGTVLLPIRQARTHSDSVVAWAQGVDDRDAAEALRGARIFVPRANFPVAGDDEYYWVDLIGLPVVNREGVALGTVRDLLPTGPQTTLVLAYEHEGKPHERMIPFVSAYVDKVDLAGRCITVDWQPDY.

Positions 114 to 190 (DDEYYWVDLI…CITVDWQPDY (77 aa)) constitute a PRC barrel domain.

Belongs to the RimM family. In terms of assembly, binds ribosomal protein uS19.

The protein localises to the cytoplasm. Its function is as follows. An accessory protein needed during the final step in the assembly of 30S ribosomal subunit, possibly for assembly of the head region. Essential for efficient processing of 16S rRNA. May be needed both before and after RbfA during the maturation of 16S rRNA. It has affinity for free ribosomal 30S subunits but not for 70S ribosomes. The chain is Ribosome maturation factor RimM from Acidovorax sp. (strain JS42).